Reading from the N-terminus, the 181-residue chain is Inner membrane-spanning protein YciB (181 aa).

5 helical membrane-spanning segments follow: residues L10–I30, M50–D70, I80–L100, V118–F138, and F148–L168.

Belongs to the YciB family.

The protein localises to the cell inner membrane. In terms of biological role, plays a role in cell envelope biogenesis, maintenance of cell envelope integrity and membrane homeostasis. This chain is Inner membrane-spanning protein YciB, found in Shewanella baltica (strain OS223).